The chain runs to 574 residues: Putative dehydratase IlvD1 (574 aa).

The [4Fe-4S] cluster site is built by Cys124 and Cys197.

This sequence belongs to the IlvD/Edd family. It depends on [4Fe-4S] cluster as a cofactor.

Functionally, involved in the degradation of galactose via the DeLey-Doudoroff pathway. This chain is Putative dehydratase IlvD1 (ilvD1), found in Rhizobium meliloti (strain 1021) (Ensifer meliloti).